The chain runs to 292 residues: Bifunctional protein FolD (292 aa).

Residues G169 to S171 and S194 contribute to the NADP(+) site.

It belongs to the tetrahydrofolate dehydrogenase/cyclohydrolase family. In terms of assembly, homodimer.

It catalyses the reaction (6R)-5,10-methylene-5,6,7,8-tetrahydrofolate + NADP(+) = (6R)-5,10-methenyltetrahydrofolate + NADPH. The catalysed reaction is (6R)-5,10-methenyltetrahydrofolate + H2O = (6R)-10-formyltetrahydrofolate + H(+). Its pathway is one-carbon metabolism; tetrahydrofolate interconversion. Catalyzes the oxidation of 5,10-methylenetetrahydrofolate to 5,10-methenyltetrahydrofolate and then the hydrolysis of 5,10-methenyltetrahydrofolate to 10-formyltetrahydrofolate. This chain is Bifunctional protein FolD, found in Nostoc punctiforme (strain ATCC 29133 / PCC 73102).